A 393-amino-acid polypeptide reads, in one-letter code: Neuroplastin (393 aa).

A signal peptide spans 1-28 (MSGSSLPGALALSLLLVSGSLLPGPGAA). Ig-like domains are found at residues 29–134 (QNAG…PSIT), 148–234 (PRIV…IEVK), and 237–327 (PDIT…ASVS). The Extracellular portion of the chain corresponds to 29 to 338 (QNAGFVKSPM…VLRVRSHLAP (310 aa)). The cysteines at positions 52 and 116 are disulfide-linked. The interval 149 to 161 (RIVTSEEVIIRDS) is narpin; mediates binding with FGFR1 and has antidepressant-like activity. An intrachain disulfide couples Cys-169 to Cys-217. N-linked (GlcNAc...) asparagine glycosylation is found at Asn-170, Asn-196, Asn-228, Asn-283, Asn-295, and Asn-316. Cys-258 and Cys-315 form a disulfide bridge. The chain crosses the membrane as a helical span at residues 339–359 (LWPFLGILAEIIILVVIIVVY). Topologically, residues 360–393 (EKRKRPDEVPDAGPMKTNSTNNHKDKNLRQRNTN) are cytoplasmic. A disordered region spans residues 366–393 (DEVPDAGPMKTNSTNNHKDKNLRQRNTN).

Interacts with ATP2B1; this interaction stabilizes ATP2B1 and increases ATPase activity; this interaction controls T cell calcium homeostasis following T cell activation. Interacts with XKR8; promoting its localization at the cell membrane. Isoform 1 and isoform 2 are N-glycosylated. In terms of tissue distribution, isoform 1 is ubiquitously expressed. Isoform 2 is brain-specific. In brain isoform 2 is highly expressed in hippocampus and cerebral cortex and weakly in cerebellum and lower brain regions. In the hippocampus isoform 2 is found in the dentate gyrus and CA1-CA4, the striatum oriens of CA3 shows the higher level.

The protein resides in the cell membrane. It is found in the postsynaptic density. Its function is as follows. Probable homophilic and heterophilic cell adhesion molecule involved in long term potentiation at hippocampal excitatory synapses through activation of p38MAPK. May also regulate neurite outgrowth by activating the FGFR1 signaling pathway. May play a role in synaptic plasticity. Also acts as a chaperone for ATP2B1; stabilizes ATP2B1 and increases its ATPase activity. Promotes localization of XKR8 at the cell membrane. The polypeptide is Neuroplastin (Nptn) (Rattus norvegicus (Rat)).